A 134-amino-acid chain; its full sequence is MAATMKKAAAEDVNVTFEDQQKINKFARNTSRITELKEEIEVKKKQLQNLEDACEDIMLADDDCLMIPYQIGDVFISHSQEETQEMLEEAKKNLQEEIDALESRVESIQRVLADLKVQLYAKFGSNINLEADES.

Residue Ala2 is modified to N-acetylalanine. Ser125 bears the Phosphoserine mark.

The protein belongs to the prefoldin subunit beta family. In terms of assembly, heterohexamer of two PFD-alpha type and four PFD-beta type subunits. Interacts with URI1; the interaction is phosphorylation-dependent and occurs in a growth-dependent manner.

Its subcellular location is the nucleus. The protein resides in the cytoplasm. It localises to the mitochondrion. Binds specifically to cytosolic chaperonin (c-CPN) and transfers target proteins to it. Binds to nascent polypeptide chain and promotes folding in an environment in which there are many competing pathways for nonnative proteins. This is Prefoldin subunit 4 (PFDN4) from Bos taurus (Bovine).